The primary structure comprises 619 residues: Phosphomethylpyrimidine synthase (619 aa).

Polar residues predominate over residues Met-1 to Ala-11. The tract at residues Met-1–Arg-25 is disordered. Substrate-binding positions include Asn-220, Met-249, Tyr-278, His-314, Ser-334 to Gly-336, Asp-375 to Arg-378, and Glu-414. Residue His-418 participates in Zn(2+) binding. Tyr-441 provides a ligand contact to substrate. Position 482 (His-482) interacts with Zn(2+). The [4Fe-4S] cluster site is built by Cys-562, Cys-565, and Cys-570.

It belongs to the ThiC family. In terms of assembly, homodimer. [4Fe-4S] cluster serves as cofactor.

It carries out the reaction 5-amino-1-(5-phospho-beta-D-ribosyl)imidazole + S-adenosyl-L-methionine = 4-amino-2-methyl-5-(phosphooxymethyl)pyrimidine + CO + 5'-deoxyadenosine + formate + L-methionine + 3 H(+). It functions in the pathway cofactor biosynthesis; thiamine diphosphate biosynthesis. Its function is as follows. Catalyzes the synthesis of the hydroxymethylpyrimidine phosphate (HMP-P) moiety of thiamine from aminoimidazole ribotide (AIR) in a radical S-adenosyl-L-methionine (SAM)-dependent reaction. The polypeptide is Phosphomethylpyrimidine synthase (Mesorhizobium japonicum (strain LMG 29417 / CECT 9101 / MAFF 303099) (Mesorhizobium loti (strain MAFF 303099))).